An 87-amino-acid polypeptide reads, in one-letter code: Cell division protein FtsL (87 aa).

The Cytoplasmic portion of the chain corresponds to 1-3; sequence MSR. The chain crosses the membrane as a helical span at residues 4-23; it reads LLLIVLLACSIASAIGVVYM. Over 24–87 the chain is Periplasmic; that stretch reads RHMHRKLFVQ…ETSDIVVIRP (64 aa).

This sequence belongs to the FtsL family. In terms of assembly, part of a complex composed of FtsB, FtsL and FtsQ.

It localises to the cell inner membrane. Functionally, essential cell division protein. May link together the upstream cell division proteins, which are predominantly cytoplasmic, with the downstream cell division proteins, which are predominantly periplasmic. The polypeptide is Cell division protein FtsL (Xanthomonas campestris pv. campestris (strain ATCC 33913 / DSM 3586 / NCPPB 528 / LMG 568 / P 25)).